We begin with the raw amino-acid sequence, 460 residues long: Putative arginine/ornithine antiporter (460 aa).

Residues 1–4 (MEKK) lie on the Cytoplasmic side of the membrane. The chain crosses the membrane as a helical span at residues 5–25 (LGLSALTALVLSSMLGAGVFS). The Periplasmic portion of the chain corresponds to 26 to 38 (LPQNMAAVASPAA). The chain crosses the membrane as a helical span at residues 39–59 (LLIGWGITGAGILLLAFAMLI). The Cytoplasmic segment spans residues 60 to 92 (LTRIRPELDGGIFTYAREGFGELIGFCSAWGYW). The chain crosses the membrane as a helical span at residues 93 to 113 (LCAVIANVSYLVIVFSALSFF). Topologically, residues 114–125 (TDTPELRLFGDG) are periplasmic. Residues 126-146 (NTWQSIVGASALLWIVHFLIL) traverse the membrane as a helical segment. Over 147 to 157 (RGVQTAASINL) the chain is Cytoplasmic. The chain crosses the membrane as a helical span at residues 158–178 (VATLAKLLPLGLFVVLAMMMF). Residues 179-201 (KLDTFKLDFTGLALGVPVWEQVK) lie on the Periplasmic side of the membrane. The chain crosses the membrane as a helical span at residues 202–222 (NTMLITLWVFIGVEGAVVVSA). The Cytoplasmic segment spans residues 223–235 (RARNKRDVGKATL). A helical transmembrane segment spans residues 236–256 (LAVLSALGVYLLVTLLSLGVV). The Periplasmic portion of the chain corresponds to 257-282 (ARPELAEIRNPSMAGLMVEMMGPWGE). The helical transmembrane segment at 283–303 (IIIAAGLIVSVCGAYLSWTIM) threads the bilayer. The Cytoplasmic portion of the chain corresponds to 304 to 331 (AAEVPFLAATHKAFPRIFARQNAQAAPS). The helical transmembrane segment at 332–352 (ASLWLTNICVQICLVLIWLTG) threads the bilayer. Residues 353–357 (SDYNT) lie on the Periplasmic side of the membrane. A helical membrane pass occupies residues 358–378 (LLTIASEMILVPYFLVGAFLL). The Cytoplasmic portion of the chain corresponds to 379–384 (KIATRP). Helical transmembrane passes span 385-405 (LHKAVGVGACIYGLWLLYASG) and 406-426 (PMHLLLSVVLYAPGLLVFLYA). Residues 427 to 439 (RKTHTHDNVLNRQ) are Cytoplasmic-facing. A helical transmembrane segment spans residues 440 to 460 (EMVLIGMLLIASVPATWMLVG).

This sequence belongs to the amino acid-polyamine-organocation (APC) superfamily. Basic amino acid/polyamine antiporter (APA) (TC 2.A.3.2) family.

The protein localises to the cell inner membrane. It carries out the reaction L-ornithine(in) + L-arginine(out) = L-ornithine(out) + L-arginine(in). Functionally, catalyzes electroneutral exchange between arginine and ornithine to allow high-efficiency energy conversion in the arginine deiminase pathway. This Escherichia coli O6:H1 (strain CFT073 / ATCC 700928 / UPEC) protein is Putative arginine/ornithine antiporter (ydgI).